Consider the following 353-residue polypeptide: Putative protein SPATA31J1 (353 aa).

The chain crosses the membrane as a helical span at residues 34–54 (IPQIIHFVLFVVFSLVILIIL). The interval 122–271 (EGSSHHLPRQ…NPGWVSWSDS (150 aa)) is disordered. Residues 182–195 (SVESLGSPSSLSSS) are compositionally biased toward low complexity. Polar residues predominate over residues 211-221 (PPASTLSPNPT). The span at 222-237 (SSTESLGYLSSLSSSQ) shows a compositional bias: low complexity. Basic residues predominate over residues 244-262 (PLKHPSHKPRGRSLPRRRN).

The protein belongs to the SPATA31 family.

The protein resides in the membrane. The sequence is that of Putative protein SPATA31J1 from Homo sapiens (Human).